A 505-amino-acid polypeptide reads, in one-letter code: Facilitated trehalose transporter Tret1 (505 aa).

Topologically, residues 1–46 are cytoplasmic; that stretch reads MEMEIKDENLRNSVPFVRQLSTDSVKTKTEYDNEDGTPYKSTTQKL. A helical transmembrane segment spans residues 47–67; sequence FLWTQLLAAFAVSVGSMNVGF. Topologically, residues 68-91 are extracellular; sequence SSGYTSPAVLTMNITLDITKEEIT. Residue asparagine 80 is glycosylated (N-linked (GlcNAc...) asparagine). Residues 92 to 112 traverse the membrane as a helical segment; sequence WVGGLMPLAALVGGIVGGPLI. Over 113–124 the chain is Cytoplasmic; it reads EYLGRKKTIMGT. A helical transmembrane segment spans residues 125-145; sequence AVPFTIGWMLIANAINVVMVF. Topologically, residues 146–149 are extracellular; sequence AGRV. A helical membrane pass occupies residues 150–170; the sequence is ICGVCVGIVSLAFPVYIGETI. Residues 171–175 lie on the Cytoplasmic side of the membrane; sequence QPEVR. Residues 176-196 form a helical membrane-spanning segment; the sequence is GALGLLPTAFGNTGILLAFLV. Residues 197–201 lie on the Extracellular side of the membrane; sequence GSYLD. The chain crosses the membrane as a helical span at residues 202 to 222; that stretch reads WSNLAFFGAAIPVPFFLLMIL. Residues 223–286 are Cytoplasmic-facing; it reads TPETPRWYVS…QLFSKRYLPA (64 aa). A helical membrane pass occupies residues 287-307; the sequence is VMISLGLMLFQQLTGINAVIF. Over 308-323 the chain is Extracellular; the sequence is YAASIFQMSGSSVDEN. Residues 324–344 traverse the membrane as a helical segment; sequence LASIIIGVVNFISTFIATMLI. The Cytoplasmic segment spans residues 345–350; sequence DRLGRK. The chain crosses the membrane as a helical span at residues 351–371; the sequence is VLLYISSVAMITTLLALGAYF. Over 372 to 390 the chain is Extracellular; that stretch reads YLKQNHIDVTAYGWLPLAC. A helical membrane pass occupies residues 391-411; the sequence is LVIYVLGFSIGFGPIPWLMLG. Topologically, residues 412 to 419 are cytoplasmic; sequence EILPSKIR. Residues 420–437 form a helical membrane-spanning segment; that stretch reads GTAASLATGFNWTCTFIV. At 438–451 the chain is on the extracellular side; that stretch reads TKTFQNIIDAIYMH. A helical transmembrane segment spans residues 452–472; it reads GTLWLFAVICIGGLLFVIFFV. Over 473-505 the chain is Cytoplasmic; that stretch reads PETKGKSLEEIEMKLTSGSRRVRNISKQPENIC.

This sequence belongs to the major facilitator superfamily. Sugar transporter (TC 2.A.1.1) family. Trehalose transporter subfamily. Expressed in many larval tissues at a low level, moderate levels of expression are seen in testis and head and highest expression in muscle.

It localises to the cell membrane. High-capacity facilitative transporter for trehalose. Does not transport maltose, sucrose or lactose. Mediates the bidirectional transfer of trehalose. Responsible for the transport of trehalose synthesized in the fat body and the incorporation of trehalose into other tissues that require a carbon source, thereby regulating trehalose levels in the hemolymph. This chain is Facilitated trehalose transporter Tret1, found in Bombyx mori (Silk moth).